The chain runs to 558 residues: Arginine--tRNA ligase (558 aa).

Residues 119–129 (ANPDGPLHVGH) carry the 'HIGH' region motif.

The protein belongs to the class-I aminoacyl-tRNA synthetase family.

The protein localises to the cytoplasm. The enzyme catalyses tRNA(Arg) + L-arginine + ATP = L-arginyl-tRNA(Arg) + AMP + diphosphate. The protein is Arginine--tRNA ligase of Methanothrix thermoacetophila (strain DSM 6194 / JCM 14653 / NBRC 101360 / PT) (Methanosaeta thermophila).